Consider the following 229-residue polypeptide: Protein GrpE (229 aa).

A disordered region spans residues 1-89 (MSDFNKDDYL…AEGSSLTPLG (89 aa)). Low complexity predominate over residues 24-36 (ASPDADGADAPSD). Residues 39-50 (EQLKDDMLKDAA) are compositionally biased toward basic and acidic residues. A compositionally biased stretch (low complexity) spans 65–84 (KAAAEATADAASDGDAEGSS).

Belongs to the GrpE family. In terms of assembly, homodimer.

It localises to the cytoplasm. Functionally, participates actively in the response to hyperosmotic and heat shock by preventing the aggregation of stress-denatured proteins, in association with DnaK and GrpE. It is the nucleotide exchange factor for DnaK and may function as a thermosensor. Unfolded proteins bind initially to DnaJ; upon interaction with the DnaJ-bound protein, DnaK hydrolyzes its bound ATP, resulting in the formation of a stable complex. GrpE releases ADP from DnaK; ATP binding to DnaK triggers the release of the substrate protein, thus completing the reaction cycle. Several rounds of ATP-dependent interactions between DnaJ, DnaK and GrpE are required for fully efficient folding. This is Protein GrpE from Bifidobacterium animalis subsp. lactis (strain AD011).